Reading from the N-terminus, the 224-residue chain is Probable amino-acid permease protein YxeN (224 aa).

A run of 6 helical transmembrane segments spans residues 3–23 (TIDW…LPIT), 24–44 (LFMA…LALI), 58–78 (LYIS…IYYG), 91–111 (ALTA…AEIF), 157–177 (FIGL…EMFA), and 190–210 (FETY…YSIL). One can recognise an ABC transmembrane type-1 domain in the interval 20–211 (LPITLFMAIA…VLTIIYSILQ (192 aa)).

This sequence belongs to the binding-protein-dependent transport system permease family. In terms of assembly, the complex is composed of two ATP-binding proteins (YxeO), two transmembrane proteins (YxeN) and a solute-binding protein (YxeM).

It localises to the cell membrane. In terms of biological role, probably part of the ABC transporter complex YxeMNO that could be involved in amino-acid import. May transport S-methylcysteine. Probably responsible for the translocation of the substrate across the membrane. The protein is Probable amino-acid permease protein YxeN (yxeN) of Bacillus subtilis (strain 168).